The sequence spans 457 residues: Argininosuccinate lyase (457 aa).

This sequence belongs to the lyase 1 family. Argininosuccinate lyase subfamily.

Its subcellular location is the cytoplasm. It catalyses the reaction 2-(N(omega)-L-arginino)succinate = fumarate + L-arginine. The protein operates within amino-acid biosynthesis; L-arginine biosynthesis; L-arginine from L-ornithine and carbamoyl phosphate: step 3/3. The sequence is that of Argininosuccinate lyase from Staphylococcus carnosus (strain TM300).